Reading from the N-terminus, the 272-residue chain is NH(3)-dependent NAD(+) synthetase (272 aa).

Residue 45-52 (GISGGQDS) participates in ATP binding. D51 is a Mg(2+) binding site. R138 contacts deamido-NAD(+). T158 lines the ATP pocket. Position 163 (E163) interacts with Mg(2+). Deamido-NAD(+)-binding residues include K171 and D178. K187 and T209 together coordinate ATP. 258-259 (HK) serves as a coordination point for deamido-NAD(+).

The protein belongs to the NAD synthetase family. As to quaternary structure, homodimer.

It catalyses the reaction deamido-NAD(+) + NH4(+) + ATP = AMP + diphosphate + NAD(+) + H(+). Its pathway is cofactor biosynthesis; NAD(+) biosynthesis; NAD(+) from deamido-NAD(+) (ammonia route): step 1/1. Its function is as follows. Catalyzes the ATP-dependent amidation of deamido-NAD to form NAD. Uses ammonia as a nitrogen source. The protein is NH(3)-dependent NAD(+) synthetase of Bacillus thuringiensis subsp. konkukian (strain 97-27).